We begin with the raw amino-acid sequence, 1371 residues long: DNA-directed RNA polymerase subunit beta'' (1371 aa).

Zn(2+) is bound by residues Cys220, Cys293, Cys300, and Cys303.

The protein belongs to the RNA polymerase beta' chain family. RpoC2 subfamily. In terms of assembly, in plastids the minimal PEP RNA polymerase catalytic core is composed of four subunits: alpha, beta, beta', and beta''. When a (nuclear-encoded) sigma factor is associated with the core the holoenzyme is formed, which can initiate transcription. Zn(2+) serves as cofactor.

It localises to the plastid. Its subcellular location is the chloroplast. It catalyses the reaction RNA(n) + a ribonucleoside 5'-triphosphate = RNA(n+1) + diphosphate. Its function is as follows. DNA-dependent RNA polymerase catalyzes the transcription of DNA into RNA using the four ribonucleoside triphosphates as substrates. This Lobularia maritima (Sweet alyssum) protein is DNA-directed RNA polymerase subunit beta''.